The chain runs to 130 residues: Small ribosomal subunit protein uS11c (130 aa).

Belongs to the universal ribosomal protein uS11 family. Part of the 30S ribosomal subunit.

It localises to the plastid. The protein resides in the chloroplast. The protein is Small ribosomal subunit protein uS11c of Angiopteris evecta (Mule's foot fern).